Consider the following 461-residue polypeptide: Protein KlcB (461 aa).

Disordered regions lie at residues 84–107 (PEAT…TEDK) and 349–379 (RAKA…EDAP). The span at 91-101 (ARRRTKARKSK) shows a compositional bias: basic residues. Over residues 357–377 (GQRREPVTPAKPEPEPAKDED) the composition is skewed to basic and acidic residues.

This chain is Protein KlcB (klcB), found in Escherichia coli.